We begin with the raw amino-acid sequence, 129 residues long: Glycine cleavage system H protein (129 aa).

A Lipoyl-binding domain is found at 24–106; it reads TYTVGITEHA…YADGWIFKIK (83 aa). At Lys65 the chain carries N6-lipoyllysine.

It belongs to the GcvH family. As to quaternary structure, the glycine cleavage system is composed of four proteins: P, T, L and H. (R)-lipoate serves as cofactor.

In terms of biological role, the glycine cleavage system catalyzes the degradation of glycine. The H protein shuttles the methylamine group of glycine from the P protein to the T protein. This chain is Glycine cleavage system H protein, found in Salmonella arizonae (strain ATCC BAA-731 / CDC346-86 / RSK2980).